A 118-amino-acid polypeptide reads, in one-letter code: Large ribosomal subunit protein bL20 (118 aa).

This sequence belongs to the bacterial ribosomal protein bL20 family.

Its function is as follows. Binds directly to 23S ribosomal RNA and is necessary for the in vitro assembly process of the 50S ribosomal subunit. It is not involved in the protein synthesizing functions of that subunit. This chain is Large ribosomal subunit protein bL20, found in Hamiltonella defensa subsp. Acyrthosiphon pisum (strain 5AT).